The following is a 113-amino-acid chain: Photosystem II reaction center Psb28 protein (113 aa).

Belongs to the Psb28 family. As to quaternary structure, part of the photosystem II complex.

The protein localises to the cellular thylakoid membrane. This is Photosystem II reaction center Psb28 protein from Prochlorococcus marinus (strain NATL2A).